Reading from the N-terminus, the 369-residue chain is Chaperone protein DnaJ (369 aa).

The 67-residue stretch at 7–73 folds into the J domain; that stretch reads DYYEILGVPR…QKRAMYDRFG (67 aa). The CR-type zinc finger occupies 143 to 225; sequence GAEIPVEYER…CGGSGRVLRK (83 aa). Cysteine 156, cysteine 159, cysteine 173, cysteine 176, cysteine 199, cysteine 202, cysteine 213, and cysteine 216 together coordinate Zn(2+). CXXCXGXG motif repeat units follow at residues 156–163, 173–180, 199–206, and 213–220; these read CPRCGGTG, CPSCGGTG, CERCGGTG, and CHECGGSG.

Belongs to the DnaJ family. Homodimer. The cofactor is Zn(2+).

It localises to the cytoplasm. Functionally, participates actively in the response to hyperosmotic and heat shock by preventing the aggregation of stress-denatured proteins and by disaggregating proteins, also in an autonomous, DnaK-independent fashion. Unfolded proteins bind initially to DnaJ; upon interaction with the DnaJ-bound protein, DnaK hydrolyzes its bound ATP, resulting in the formation of a stable complex. GrpE releases ADP from DnaK; ATP binding to DnaK triggers the release of the substrate protein, thus completing the reaction cycle. Several rounds of ATP-dependent interactions between DnaJ, DnaK and GrpE are required for fully efficient folding. Also involved, together with DnaK and GrpE, in the DNA replication of plasmids through activation of initiation proteins. The protein is Chaperone protein DnaJ of Thermotoga petrophila (strain ATCC BAA-488 / DSM 13995 / JCM 10881 / RKU-1).